We begin with the raw amino-acid sequence, 382 residues long: Lipid-A-disaccharide synthase (382 aa).

It belongs to the LpxB family.

The catalysed reaction is a lipid X + a UDP-2-N,3-O-bis[(3R)-3-hydroxyacyl]-alpha-D-glucosamine = a lipid A disaccharide + UDP + H(+). The protein operates within bacterial outer membrane biogenesis; LPS lipid A biosynthesis. In terms of biological role, condensation of UDP-2,3-diacylglucosamine and 2,3-diacylglucosamine-1-phosphate to form lipid A disaccharide, a precursor of lipid A, a phosphorylated glycolipid that anchors the lipopolysaccharide to the outer membrane of the cell. The polypeptide is Lipid-A-disaccharide synthase (Alteromonas mediterranea (strain DSM 17117 / CIP 110805 / LMG 28347 / Deep ecotype)).